The following is a 409-amino-acid chain: Imidazolonepropionase (409 aa).

Fe(3+)-binding residues include histidine 78 and histidine 80. Histidine 78 and histidine 80 together coordinate Zn(2+). Arginine 87, tyrosine 150, and histidine 183 together coordinate 4-imidazolone-5-propanoate. Tyrosine 150 contributes to the N-formimidoyl-L-glutamate binding site. Histidine 248 contacts Fe(3+). Histidine 248 is a binding site for Zn(2+). Residue glutamine 251 participates in 4-imidazolone-5-propanoate binding. Residue aspartate 323 coordinates Fe(3+). A Zn(2+)-binding site is contributed by aspartate 323. Residues asparagine 325 and glycine 327 each contribute to the N-formimidoyl-L-glutamate site. Threonine 328 is a binding site for 4-imidazolone-5-propanoate.

This sequence belongs to the metallo-dependent hydrolases superfamily. HutI family. Zn(2+) is required as a cofactor. Fe(3+) serves as cofactor.

The protein resides in the cytoplasm. It catalyses the reaction 4-imidazolone-5-propanoate + H2O = N-formimidoyl-L-glutamate. It functions in the pathway amino-acid degradation; L-histidine degradation into L-glutamate; N-formimidoyl-L-glutamate from L-histidine: step 3/3. Catalyzes the hydrolytic cleavage of the carbon-nitrogen bond in imidazolone-5-propanoate to yield N-formimidoyl-L-glutamate. It is the third step in the universal histidine degradation pathway. The chain is Imidazolonepropionase from Mesorhizobium japonicum (strain LMG 29417 / CECT 9101 / MAFF 303099) (Mesorhizobium loti (strain MAFF 303099)).